Here is a 349-residue protein sequence, read N- to C-terminus: Interferon-stimulated 20 kDa exonuclease-like 2 (349 aa).

Disordered stretches follow at residues 1-100 (MSTL…AAVP) and 126-166 (ALPK…KYSG). Positions 14 to 23 (PPKKALEGNA) are enriched in basic and acidic residues. The span at 24–47 (KHRKFVKKRRLLERKGFLNKKKQP) shows a compositional bias: basic residues. The segment covering 54–66 (LHSEPSQKGETPR) has biased composition (basic and acidic residues). The span at 70-87 (TWKATPLPKKKTTAASSS) shows a compositional bias: low complexity. The segment covering 130 to 142 (IKSHPTRPQKKGS) has biased composition (basic residues). The region spanning 175–331 (MVAIDCEMVG…EDAQATMELY (157 aa)) is the Exonuclease domain.

The protein localises to the nucleus. It is found in the nucleolus. Functionally, 3'-&gt; 5'-exoribonuclease involved in ribosome biogenesis in the processing of the 12S pre-rRNA. Displays a strong specificity for a 3'-end containing a free hydroxyl group. The protein is Interferon-stimulated 20 kDa exonuclease-like 2 (ISG20L2) of Bos taurus (Bovine).